The following is a 535-amino-acid chain: Inositol 1,4,5-trisphosphate receptor-interacting protein-like 2 (535 aa).

The N-terminal stretch at 1–38 (MSVHYTLNLRVFWPLVTGLCTALVCLYHVLRGSGGARA) is a signal peptide. Topologically, residues 39 to 43 (EPADG) are extracellular. A helical transmembrane segment spans residues 44–64 (VDGGFPLLKVAVLLLLSYVLL). The Cytoplasmic portion of the chain corresponds to 65–535 (RCRHAVRQRF…RTQGFLEGEP (471 aa)). The residue at position 139 (Ser139) is a Phosphoserine.

The protein belongs to the ITPRIP family.

It localises to the membrane. The sequence is that of Inositol 1,4,5-trisphosphate receptor-interacting protein-like 2 (ITPRIPL2) from Homo sapiens (Human).